The following is a 214-amino-acid chain: ATP-dependent Clp protease proteolytic subunit (214 aa).

The active-site Nucleophile is Ser110. His135 is a catalytic residue.

It belongs to the peptidase S14 family. Fourteen ClpP subunits assemble into 2 heptameric rings which stack back to back to give a disk-like structure with a central cavity, resembling the structure of eukaryotic proteasomes.

It localises to the cytoplasm. The catalysed reaction is Hydrolysis of proteins to small peptides in the presence of ATP and magnesium. alpha-casein is the usual test substrate. In the absence of ATP, only oligopeptides shorter than five residues are hydrolyzed (such as succinyl-Leu-Tyr-|-NHMec, and Leu-Tyr-Leu-|-Tyr-Trp, in which cleavage of the -Tyr-|-Leu- and -Tyr-|-Trp bonds also occurs).. Functionally, cleaves peptides in various proteins in a process that requires ATP hydrolysis. Has a chymotrypsin-like activity. Plays a major role in the degradation of misfolded proteins. The protein is ATP-dependent Clp protease proteolytic subunit of Legionella pneumophila (strain Paris).